A 1141-amino-acid chain; its full sequence is MAASRSSSRISFAKIIEPLEVPDLLALQTQSFDWLIGSDAWAERVQEAIDSGRDDVPITSGLEEVFKEISPIEDFSGSMSLSFRDHRFEPPKYSVEECKDKDMTFSAPLFVTAEFTNNNTGEIKSQTVFMGDFPLMTPKGTFVINGTERVVVSQLVRSPGVYFERSLDKASDKDLYSCKVIPSRGAWLEFEIDKRDTVGVRIDRKRRQSVTVLLKALGWDEARILERFGDFPSMRITLEKDHTAGQDDALLDIYRKLRPGEPPTRESAQTLLENLFFNPKRYDLAKVGRYKVNKKLSLGVAHDVGVLTENDIVRTIEYVVKLHAGADPAEYEVDDIDHFGNRRIRTVGELIQNQVRLGLARMERVVRERMTTQDVEAITPQTLINIRPVVASIKEFFGTSQLSQFMDQTNPLAGLTHKRRLNALGPGGLSRERAGFEVRDVHPSHYGRMCPIETPEGPNIGLIGSLSTFARVNPFGFIETPYRKVENGRVTGQIDWLTADEEDRHVKAQANTPLRPDGSFAEDRVLVRRKGGEVEFIPPDEVDYMDVSPRQMVSVATAMIPFLEHDDANRALMGSNMQRQSVPLLRSEAPLVGTGMEARAAKDAGDVVVCAQAGVVEDLSADYITVMHDDGTRRTYRLAKFRRSNQGTCINQKPIVNEGDRVGAGQVIADGPCTDNGEMALGKNLLVAFMPWEGHNYEDAIILSQRLVQDDVLSSIHIEEHEVDARDTKLGPEEITRDIPNVAEEVLADLDERGIIRIGAEVSPGDVLVGKVTPKGETELTPEERLLRAIFGEKAREVRDTSLKVPHGESGKVIGVRVFSREDGDELPPGVNELVRVYVAQKRKITDGDKLAGRHGNKGVIAKILPAEDMPFLEDGTPVDVVLNPHGVPRRMNIGQILETHLGWVAKTGWQVDSGTEDWKERLRGIGADAASAGTNVATPVFDGAREEEITGLLDSTLPNRDGIQLIGSSGKAKLFDGRTGEPYPYPVAVGYIYILKLLHLVDDKIHARSTGPYSMITQQPLGGKAQFGGQRFGEMEVWALEAYGAAYALQELLTIKSDDVVGRVKVYEAIVKGENIPEPGIPESFKVLIKEMQSLCLNVEVLSSDGVQIEMRDTDEDVFRAAEELGIDLSRREPSSVEEV.

It belongs to the RNA polymerase beta chain family. The RNAP catalytic core consists of 2 alpha, 1 beta, 1 beta' and 1 omega subunit. When a sigma factor is associated with the core the holoenzyme is formed, which can initiate transcription.

It carries out the reaction RNA(n) + a ribonucleoside 5'-triphosphate = RNA(n+1) + diphosphate. Its function is as follows. DNA-dependent RNA polymerase catalyzes the transcription of DNA into RNA using the four ribonucleoside triphosphates as substrates. The polypeptide is DNA-directed RNA polymerase subunit beta (Frankia casuarinae (strain DSM 45818 / CECT 9043 / HFP020203 / CcI3)).